The primary structure comprises 417 residues: Xylulose 5-phosphate/phosphate translocator, chloroplastic (417 aa).

Residues 1–82 constitute a chloroplast transit peptide; sequence MISLNLSPSL…GFSRKPRSIA (82 aa). The disordered stretch occupies residues 66–102; it reads TNPESSSGFSRKPRSIAAVGSSDSNPDEKSDLGEAEK. A83 is modified (N-acetylalanine). A compositionally biased stretch (basic and acidic residues) spans 91 to 102; that stretch reads PDEKSDLGEAEK. Helical transmembrane passes span 109 to 129, 141 to 161, 173 to 193, 198 to 218, 225 to 245, 247 to 267, 287 to 307, 318 to 338, and 384 to 404; these read TLQLGIVFGLWYFQNIVFNIF, WLLASFQLFAGSIWMLVLWSF, FIIALLGPALFHTIGHISACV, VAVSFTHVIKSAEPVFSVIFS, YPLAVWLSILPIVMGCSLAAV, EVSFNLGGLSGAMISNVGFVL, LYGCISILSLLYLFPVAIFVE, AIASVGTPSTFYFWVLLSGVF, and LNALGSAIAIFGTFLYSQATA. The EamA domain maps to 127–243; that stretch reads NIFNKKALNV…LPIVMGCSLA (117 aa).

Belongs to the TPT transporter family. TPT (TC 2.A.7.9) subfamily. Widely expressed.

It is found in the plastid. Its subcellular location is the chloroplast membrane. Sugar phosphate/phosphate translocator that transports inorganic phosphate, triose phosphate, 3-phosphoglycerate, xylulose 5-phosphate (Xul-5-P) and to a lesser extent ribulose 5-phosphate. Does not transport ribose 5-phosphate or hexose phosphates. Provides cytosolic Xul-5-P to the chloroplast, where it is used as an intermediate in the plastidic pentose phosphate pathways. The protein is Xylulose 5-phosphate/phosphate translocator, chloroplastic (XPT) of Arabidopsis thaliana (Mouse-ear cress).